The chain runs to 150 residues: Protein A151R (150 aa).

Belongs to the asfivirus A151R family. As to quaternary structure, monomer. Homodimer. Interacts with protein B119L. Interacts with membrane protein E248R. Requires Zn(2+) as cofactor.

Functionally, may participate in a redox cascade for the formation of disulfide bonds in viral proteins. The protein is Protein A151R of African swine fever virus (isolate Tick/Malawi/Lil 20-1/1983) (ASFV).